Reading from the N-terminus, the 407-residue chain is Tryptophan synthase beta chain (407 aa).

Lys91 bears the N6-(pyridoxal phosphate)lysine mark.

Belongs to the TrpB family. In terms of assembly, tetramer of two alpha and two beta chains. Pyridoxal 5'-phosphate serves as cofactor.

The enzyme catalyses (1S,2R)-1-C-(indol-3-yl)glycerol 3-phosphate + L-serine = D-glyceraldehyde 3-phosphate + L-tryptophan + H2O. Its pathway is amino-acid biosynthesis; L-tryptophan biosynthesis; L-tryptophan from chorismate: step 5/5. Functionally, the beta subunit is responsible for the synthesis of L-tryptophan from indole and L-serine. The protein is Tryptophan synthase beta chain of Streptococcus pneumoniae (strain JJA).